The chain runs to 176 residues: Superoxide oxidase CybB (176 aa).

The Cytoplasmic segment spans residues 1-7 (MENKYSR). A helical transmembrane segment spans residues 8 to 29 (LQISIHWLVFLLVIAAYCAMEF). A heme b-binding site is contributed by histidine 13. At 30–39 (RGFFPRSDRP) the chain is on the periplasmic side. The helical transmembrane segment at 40–64 (LINMIHVSCGISILVLMVVRLLLRL) threads the bilayer. Heme b is bound at residue histidine 45. At 65–77 (KYPTPPIIPKPKP) the chain is on the cytoplasmic side. The chain crosses the membrane as a helical span at residues 78-103 (MMTGLAHLGHLVIYLLFIALPVIGLV). Residues 104–135 (MMYNRGNPWFAFGLTMPYASEANFERVDSLKS) lie on the Periplasmic side of the membrane. The chain crosses the membrane as a helical span at residues 136-158 (WHETLANLGYFVIGLHAAAALAH). Residues histidine 137 and histidine 151 each coordinate heme b. The Cytoplasmic portion of the chain corresponds to 159–176 (HYFWKDNTLLRMMPRKRS).

This sequence belongs to the cytochrome b561 family. In terms of assembly, monomer. Heme b serves as cofactor.

It localises to the cell inner membrane. It carries out the reaction a ubiquinol + 2 O2 = 2 superoxide + a ubiquinone + 2 H(+). It catalyses the reaction a menaquinol + 2 O2 = 2 superoxide + a menaquinone + 2 H(+). Quinone binding to the enzyme accelerates the reaction with superoxide. B-type di-heme cytochrome. Catalyzes the oxidation of superoxide to molecular oxygen and transfers the extracted electrons to ubiquinone through the two hemes. Can also use menaquinone. The enzyme may be responsible for the detoxification of the superoxide anion produced in the membrane or at its surface. However, it can also efficiently catalyze the formation of superoxide from ubiquinol under physiological conditions. This Escherichia coli (strain K12) protein is Superoxide oxidase CybB.